The primary structure comprises 412 residues: MGAMFFGLMLFTLGWTLIDGSESEQDFMWHVRKIPRLVSERTFHLTSPAFEADAKMVLNRVCGIECQKDLPAPSLSDLEDSLSYETVFENGSRTLTRVKVQGWVPEPTQNLTSQGAPVRRKRQVYGTDSRFSILDKKFLTNFPFNTAVKLSTGCSGILISPNHVLTAAHCVHDGNGYIKGSKKLRVGLLKMRNKGGGKRRRGSRRNRREVSGAGREGSQDSLKETAKAGRRRKGSARRQRAADGRPSFQWTRVKNTHIPKGWARGESRDPALDYDYALLELKRPHKKKYMELGVSPTIKKLPGGMIHFSGFDQDRADQLVYRFCSVSDESNDLLYQYCDAESGSTGSGVYLRLKEPDKKRWKRKIIAIYSGHQWVDVHGVQKDYNVAVRITPLKYAQICLWMHGDDANCTQG.

A signal peptide spans 1–23; sequence MGAMFFGLMLFTLGWTLIDGSES. Asparagine 110 carries an N-linked (GlcNAc...) asparagine glycan. The Peptidase S1 domain occupies 124–407; that stretch reads VYGTDSRFSI…ICLWMHGDDA (284 aa). A disulfide bond links cysteine 154 and cysteine 170. Basic residues predominate over residues 192–207; it reads RNKGGGKRRRGSRRNR. The interval 192-246 is disordered; the sequence is RNKGGGKRRRGSRRNRREVSGAGREGSQDSLKETAKAGRRRKGSARRQRAADGRP. Residues 217-227 show a composition bias toward basic and acidic residues; that stretch reads GSQDSLKETAK. Over residues 228 to 239 the composition is skewed to basic residues; it reads AGRRRKGSARRQ.

The protein belongs to the peptidase S1 family.

The protein localises to the secreted. The protein is Inactive serine protease 35 (PRSS35) of Bos taurus (Bovine).